The primary structure comprises 255 residues: Octanoyltransferase (255 aa).

Residues 54-238 (GDAAELVWLL…AFTEIFGATV (185 aa)) form the BPL/LPL catalytic domain. Substrate contacts are provided by residues 92-99 (RGGQLTYH), 167-169 (AIG), and 180-182 (GIA). Cysteine 198 acts as the Acyl-thioester intermediate in catalysis.

It belongs to the LipB family.

Its subcellular location is the cytoplasm. The catalysed reaction is octanoyl-[ACP] + L-lysyl-[protein] = N(6)-octanoyl-L-lysyl-[protein] + holo-[ACP] + H(+). It functions in the pathway protein modification; protein lipoylation via endogenous pathway; protein N(6)-(lipoyl)lysine from octanoyl-[acyl-carrier-protein]: step 1/2. Catalyzes the transfer of endogenously produced octanoic acid from octanoyl-acyl-carrier-protein onto the lipoyl domains of lipoate-dependent enzymes. Lipoyl-ACP can also act as a substrate although octanoyl-ACP is likely to be the physiological substrate. The protein is Octanoyltransferase of Rhodopseudomonas palustris (strain HaA2).